Here is a 439-residue protein sequence, read N- to C-terminus: Tol-Pal system protein TolB (439 aa).

The first 22 residues, 1-22 (MKKPLRWLAALTALLLPLSALA), serve as a signal peptide directing secretion.

This sequence belongs to the TolB family. In terms of assembly, the Tol-Pal system is composed of five core proteins: the inner membrane proteins TolA, TolQ and TolR, the periplasmic protein TolB and the outer membrane protein Pal. They form a network linking the inner and outer membranes and the peptidoglycan layer.

It localises to the periplasm. In terms of biological role, part of the Tol-Pal system, which plays a role in outer membrane invagination during cell division and is important for maintaining outer membrane integrity. This is Tol-Pal system protein TolB from Xanthomonas axonopodis pv. citri (strain 306).